Reading from the N-terminus, the 140-residue chain is Neurotrophin-7 (140 aa).

The propeptide occupies 1–7; sequence PGPRVRR. 3 cysteine pairs are disulfide-bonded: cysteine 21–cysteine 101, cysteine 64–cysteine 129, and cysteine 89–cysteine 131.

Belongs to the NGF-beta family.

It localises to the secreted. The chain is Neurotrophin-7 (ntf7) from Cyprinus carpio (Common carp).